The chain runs to 117 residues: MISKPDKNKLRVKRHKRVRGKISGTAARPRLNVFRSNANIYAQLIDDVAGVTLASASSHDAEVTGSKTEQAVKVGELIASRGKAAKIEDVIFDRGGYVYHGRVQALADSARENGLKF.

This sequence belongs to the universal ribosomal protein uL18 family. As to quaternary structure, part of the 50S ribosomal subunit; part of the 5S rRNA/L5/L18/L25 subcomplex. Contacts the 5S and 23S rRNAs.

Functionally, this is one of the proteins that bind and probably mediate the attachment of the 5S RNA into the large ribosomal subunit, where it forms part of the central protuberance. In Leuconostoc mesenteroides subsp. mesenteroides (strain ATCC 8293 / DSM 20343 / BCRC 11652 / CCM 1803 / JCM 6124 / NCDO 523 / NBRC 100496 / NCIMB 8023 / NCTC 12954 / NRRL B-1118 / 37Y), this protein is Large ribosomal subunit protein uL18.